A 117-amino-acid chain; its full sequence is Large ribosomal subunit protein uL24 (117 aa).

Over residues 1-10 (MSKQPRKQRK) the composition is skewed to basic residues. A disordered region spans residues 1–28 (MSKQPRKQRKALYTAPLHKRHNSMSVHL).

This sequence belongs to the universal ribosomal protein uL24 family. Part of the 50S ribosomal subunit.

Functionally, one of two assembly initiator proteins, it binds directly to the 5'-end of the 23S rRNA, where it nucleates assembly of the 50S subunit. Located at the polypeptide exit tunnel on the outside of the subunit. This Methanosphaera stadtmanae (strain ATCC 43021 / DSM 3091 / JCM 11832 / MCB-3) protein is Large ribosomal subunit protein uL24.